The following is a 552-amino-acid chain: Urocanate hydratase (552 aa).

NAD(+) is bound by residues 49–50 (GG), Gln127, 173–175 (GMG), Asp193, 239–240 (NA), 260–264 (QTSAH), 270–271 (YI), and Tyr319. Cys407 is an active-site residue. Residue Gly489 participates in NAD(+) binding.

This sequence belongs to the urocanase family. NAD(+) serves as cofactor.

Its subcellular location is the cytoplasm. The enzyme catalyses 4-imidazolone-5-propanoate = trans-urocanate + H2O. Its pathway is amino-acid degradation; L-histidine degradation into L-glutamate; N-formimidoyl-L-glutamate from L-histidine: step 2/3. Catalyzes the conversion of urocanate to 4-imidazolone-5-propionate. The protein is Urocanate hydratase of Bacillus cereus (strain AH187).